The primary structure comprises 174 residues: Superoxide dismutase [Cu-Zn] (174 aa).

A signal peptide spans 1–23 (MIRLSAAAALGLAAALAASPALA). Residues histidine 68, histidine 70, and histidine 86 each contribute to the Cu cation site. Cysteines 75 and 170 form a disulfide. Residues histidine 86, histidine 95, aspartate 104, and aspartate 107 each coordinate Zn(2+). Histidine 150 contributes to the Cu cation binding site.

The protein belongs to the Cu-Zn superoxide dismutase family. As to quaternary structure, homodimer. Requires Cu cation as cofactor. The cofactor is Zn(2+).

It localises to the periplasm. It catalyses the reaction 2 superoxide + 2 H(+) = H2O2 + O2. Its function is as follows. Destroys radicals which are normally produced within the cells and which are toxic to biological systems. May function against extracytoplasmic toxic oxygen species. The sequence is that of Superoxide dismutase [Cu-Zn] (sodC) from Caulobacter vibrioides (strain ATCC 19089 / CIP 103742 / CB 15) (Caulobacter crescentus).